Consider the following 396-residue polypeptide: Elongation factor Tu (396 aa).

The tr-type G domain occupies 10–206; it reads KPHVNVGTIG…ALDSYIPEPE (197 aa). A G1 region spans residues 19-26; sequence GHVDHGKT. A GTP-binding site is contributed by 19–26; that stretch reads GHVDHGKT. Position 26 (threonine 26) interacts with Mg(2+). The tract at residues 60–64 is G2; sequence GITIN. The tract at residues 81-84 is G3; the sequence is DCPG. GTP is bound by residues 81–85 and 136–139; these read DCPGH and NKCD. The G4 stretch occupies residues 136 to 139; sequence NKCD. The tract at residues 174–176 is G5; that stretch reads SAL.

It belongs to the TRAFAC class translation factor GTPase superfamily. Classic translation factor GTPase family. EF-Tu/EF-1A subfamily. As to quaternary structure, monomer.

It is found in the cytoplasm. It carries out the reaction GTP + H2O = GDP + phosphate + H(+). Its function is as follows. GTP hydrolase that promotes the GTP-dependent binding of aminoacyl-tRNA to the A-site of ribosomes during protein biosynthesis. The chain is Elongation factor Tu from Acinetobacter baumannii (strain ATCC 17978 / DSM 105126 / CIP 53.77 / LMG 1025 / NCDC KC755 / 5377).